A 216-amino-acid chain; its full sequence is Regulator of G-protein signaling 19 (216 aa).

Residues 1 to 19 are compositionally biased toward basic and acidic residues; that stretch reads MPTPHEAEKQHTGPEEADR. The segment at 1–30 is disordered; that stretch reads MPTPHEAEKQHTGPEEADRPPSMSSHDAAP. S24 is modified (phosphoserine; by CK2). One can recognise an RGS domain in the interval 90-206; the sequence is SFDKLMHSPT…LTSPTYRSLL (117 aa). S97 is subject to Phosphoserine. S151 carries the post-translational modification Phosphoserine; by MAPK1 and MAPK3. The tract at residues 207 to 216 is interaction with GIPC; sequence LQGAPQSSEA.

As to quaternary structure, interacts with GIPC PDZ domain. Interacts with GNAO1. In terms of processing, fatty acylated. Heavily palmitoylated in the cysteine string motif. Phosphorylated, mainly on serine residues.

It is found in the membrane. In terms of biological role, inhibits signal transduction by increasing the GTPase activity of G protein alpha subunits thereby driving them into their inactive GDP-bound form. Binds to G-alpha subfamily 1 members, predominantly to G(i)-alpha-3. Activity on G(z)-alpha is inhibited by phosphorylation and palmitoylation of the G-protein. This chain is Regulator of G-protein signaling 19 (Rgs19), found in Rattus norvegicus (Rat).